The chain runs to 125 residues: Snaclec alboaggregin-A subunit beta (125 aa).

The C-type lectin domain occupies 1 to 125 (GFDCPFGWSS…TRYPVCKFXG (125 aa)). Cystine bridges form between C4-C15, C32-C121, and C98-C113.

This sequence belongs to the snaclec family. As to quaternary structure, heterotetramer of the subunits alpha, alpha', beta and beta'; disulfide-linked. Expressed by the venom gland.

Its subcellular location is the secreted. Functionally, potent platelet activator that aggregates platelets via both GPIbalpha (GP1BA) and GPVI (GP6). Induces a tyrosine phosphorylation profile in platelets that resembles this produced by collagen, involving the time dependent tyrosine phosphorylation of Fc receptor gamma chain (FCGR1A), phospholipase Cgamma2 (PLCG2), and LAT. The sequence is that of Snaclec alboaggregin-A subunit beta from Trimeresurus albolabris (White-lipped pit viper).